Consider the following 331-residue polypeptide: Holliday junction branch migration complex subunit RuvB (331 aa).

Residues 1–186 (MAKTMMQDRL…FGIVQRLEFY (186 aa)) are large ATPase domain (RuvB-L). ATP is bound by residues Ile25, Arg26, Gly67, Lys70, Thr71, Thr72, 133–135 (EDF), Arg176, Tyr186, and Arg223. Residue Thr71 coordinates Mg(2+). The small ATPAse domain (RuvB-S) stretch occupies residues 187–257 (NIADLTTIVS…IAGSALDMLA (71 aa)). The interval 260–331 (RRGLDHLDRR…LTQMAIDQML (72 aa)) is head domain (RuvB-H). Residues Arg296, Arg315, and Arg320 each contribute to the DNA site.

It belongs to the RuvB family. In terms of assembly, homohexamer. Forms an RuvA(8)-RuvB(12)-Holliday junction (HJ) complex. HJ DNA is sandwiched between 2 RuvA tetramers; dsDNA enters through RuvA and exits via RuvB. An RuvB hexamer assembles on each DNA strand where it exits the tetramer. Each RuvB hexamer is contacted by two RuvA subunits (via domain III) on 2 adjacent RuvB subunits; this complex drives branch migration. In the full resolvosome a probable DNA-RuvA(4)-RuvB(12)-RuvC(2) complex forms which resolves the HJ.

It localises to the cytoplasm. It catalyses the reaction ATP + H2O = ADP + phosphate + H(+). Functionally, the RuvA-RuvB-RuvC complex processes Holliday junction (HJ) DNA during genetic recombination and DNA repair, while the RuvA-RuvB complex plays an important role in the rescue of blocked DNA replication forks via replication fork reversal (RFR). RuvA specifically binds to HJ cruciform DNA, conferring on it an open structure. The RuvB hexamer acts as an ATP-dependent pump, pulling dsDNA into and through the RuvAB complex. RuvB forms 2 homohexamers on either side of HJ DNA bound by 1 or 2 RuvA tetramers; 4 subunits per hexamer contact DNA at a time. Coordinated motions by a converter formed by DNA-disengaged RuvB subunits stimulates ATP hydrolysis and nucleotide exchange. Immobilization of the converter enables RuvB to convert the ATP-contained energy into a lever motion, pulling 2 nucleotides of DNA out of the RuvA tetramer per ATP hydrolyzed, thus driving DNA branch migration. The RuvB motors rotate together with the DNA substrate, which together with the progressing nucleotide cycle form the mechanistic basis for DNA recombination by continuous HJ branch migration. Branch migration allows RuvC to scan DNA until it finds its consensus sequence, where it cleaves and resolves cruciform DNA. This chain is Holliday junction branch migration complex subunit RuvB, found in Psychrobacter cryohalolentis (strain ATCC BAA-1226 / DSM 17306 / VKM B-2378 / K5).